Reading from the N-terminus, the 706-residue chain is Protein psiG (706 aa).

Positions 1–23 (MKIILTLLIILFSLNKNLNFVSS) are cleaved as a signal peptide. At 24–644 (EVTKSRICSI…FVCKPAAIIS (621 aa)) the chain is on the extracellular side. N-linked (GlcNAc...) asparagine glycans are attached at residues Asn95, Asn107, Asn212, Asn296, Asn429, Asn521, Asn532, and Asn616. Residues 109-253 (TLDKSSNIYS…SDYCGVCQGD (145 aa)) form the PA14 domain. The helical transmembrane segment at 645-665 (TSVIVGVSVAAAVVAIAIVVA) threads the bilayer. Topologically, residues 666–706 (SKKGYDAWAASNNNSLASLTSNPLYENPTGNGDNPMYQPNS) are cytoplasmic. The tract at residues 687 to 706 (NPLYENPTGNGDNPMYQPNS) is disordered. Residues 693–706 (PTGNGDNPMYQPNS) are compositionally biased toward polar residues.

This sequence belongs to the prespore-cell-inducing factor family.

The protein resides in the membrane. This is Protein psiG (psiG-1) from Dictyostelium discoideum (Social amoeba).